The following is a 444-amino-acid chain: E1B 55 kDa protein (444 aa).

Residues 1-35 are disordered; it reads MEQNADMEPDRQVNQRPPRFRARGAGVRGRGRVRR. Phosphoserine is present on residues serine 438 and serine 439.

This sequence belongs to the adenoviridae E1B 55 kDa protein family. As to quaternary structure, interacts with host PML-4 and PML-5; this interaction promotes efficient subnuclear targeting of E1B-55K to PML nuclear bodies. Interacts with E4-ORF3 protein. Interacts with E4-ORF6 protein.

It is found in the host nucleus. The protein resides in the host cytoplasm. Functionally, plays a major role to prevent cellular inhibition of viral genome replication. Assembles an SCF-like E3 ubiquitin ligase complex based on the cellular proteins ELOB, ELOC, CUL5 and RBX1, in cooperation with viral E4orf6. This viral RING-type ligase ubiquitinates cellular substrates and targets them to proteasomal degradation: TP53/p53, LIG4, MRE11-RAD50-NBS1 (MRN) complex, ITGA3, DAXX and BLM. E1B-55K probably acts as the substrate-specific adapter of the SCF-like E3 ubiquitin ligase complex. Degradation of host TP53/p53 activity is essential for preventing E1A-induced TP53 accumulation that would otherwise lead to cell apoptosis and growth arrest. E1B-55K also inactivates TP53 transcription-factor activity by binding its transactivation domain. E1B-55K also functions as a SUMO1 E3 ligase for TP53 which causes the latter to be sequestered in promyelocytic leukemia (PML) nuclear bodies thereby contributing to maximal inhibition of TP53 function. The sequence is that of E1B 55 kDa protein from Canis lupus familiaris (Dog).